Reading from the N-terminus, the 363-residue chain is Small ribosomal subunit biogenesis GTPase RsgA (363 aa).

The 157-residue stretch at 112–268 (HQQVIAANID…LIDTPGMREL (157 aa)) folds into the CP-type G domain. GTP-binding positions include 157-160 (TKAD) and 210-218 (GSSGAGKST). Zn(2+)-binding residues include cysteine 291, cysteine 296, histidine 298, and cysteine 304. The interval 340–363 (RVAQNNRGKGSGKRPASIDRPGRR) is disordered.

The protein belongs to the TRAFAC class YlqF/YawG GTPase family. RsgA subfamily. As to quaternary structure, monomer. Associates with 30S ribosomal subunit, binds 16S rRNA. Zn(2+) serves as cofactor.

It localises to the cytoplasm. One of several proteins that assist in the late maturation steps of the functional core of the 30S ribosomal subunit. Helps release RbfA from mature subunits. May play a role in the assembly of ribosomal proteins into the subunit. Circularly permuted GTPase that catalyzes slow GTP hydrolysis, GTPase activity is stimulated by the 30S ribosomal subunit. This chain is Small ribosomal subunit biogenesis GTPase RsgA, found in Xanthomonas oryzae pv. oryzae (strain MAFF 311018).